A 184-amino-acid chain; its full sequence is Putative pre-16S rRNA nuclease (184 aa).

A disordered region spans residues Met1 to Pro23.

Belongs to the YqgF nuclease family.

The protein localises to the cytoplasm. In terms of biological role, could be a nuclease involved in processing of the 5'-end of pre-16S rRNA. The sequence is that of Putative pre-16S rRNA nuclease from Mycobacterium leprae (strain Br4923).